A 191-amino-acid polypeptide reads, in one-letter code: MSEKKNKKEKLADEIEQEELNILDETEETVEEEAAADTLTEEQAKILELENKLDEVENRYLRMQADFENVKKRHIADRDASQKYRSQSLAQDLLPALDSFEKALATTSDQEEVKQILKGMEMVYNQILVAFEKEGIEVIPAVGEQFDPNFHQAVMQDSDENAGSNEITAELQKGYKLKDRVIRPSMVKVNQ.

It belongs to the GrpE family. In terms of assembly, homodimer.

It localises to the cytoplasm. Its function is as follows. Participates actively in the response to hyperosmotic and heat shock by preventing the aggregation of stress-denatured proteins, in association with DnaK and GrpE. It is the nucleotide exchange factor for DnaK and may function as a thermosensor. Unfolded proteins bind initially to DnaJ; upon interaction with the DnaJ-bound protein, DnaK hydrolyzes its bound ATP, resulting in the formation of a stable complex. GrpE releases ADP from DnaK; ATP binding to DnaK triggers the release of the substrate protein, thus completing the reaction cycle. Several rounds of ATP-dependent interactions between DnaJ, DnaK and GrpE are required for fully efficient folding. This is Protein GrpE from Listeria monocytogenes serotype 4a (strain HCC23).